Here is a 1251-residue protein sequence, read N- to C-terminus: Probable transcription factor TDA9 (1251 aa).

C2H2-type zinc fingers lie at residues 61–83 and 89–112; these read FLCH…QRAH and FLCV…HKLH. 2 disordered regions span residues 160-227 and 398-428; these read VQLK…KSKR and NHSH…IEKS. Over residues 164–173 the composition is skewed to basic residues; that stretch reads KAAKEKKNGK. Polar residues predominate over residues 183–202; sequence YGANNHSTDVSPSVGNSSTP. Residues 407–428 are compositionally biased toward low complexity; that stretch reads NNSSSGINYSNNKNNNESIEKS. Phosphoserine is present on residues Ser-527 and Ser-603. Residues 617–634 show a composition bias toward low complexity; that stretch reads SLTPSLTTQTATTQSGPG. Residues 617-636 are disordered; it reads SLTPSLTTQTATTQSGPGWT.

Belongs to the RSF2/TDA9 family.

It is found in the nucleus. Functionally, DNA-binding protein that acts probably as a transcription factor. The sequence is that of Probable transcription factor TDA9 (TDA9) from Saccharomyces cerevisiae (strain ATCC 204508 / S288c) (Baker's yeast).